A 296-amino-acid chain; its full sequence is Protoheme IX farnesyltransferase 2 (296 aa).

Transmembrane regions (helical) follow at residues 7–27 (LLVA…GGYF), 36–56 (PMLL…GCVL), 83–103 (LKAA…LLWW), 108–128 (LTTA…SLWF), 134–154 (YGTL…YCAV), 163–183 (ASLL…IAIF), 207–227 (IHIV…CLGG), 229–249 (AGYG…AIAL), and 265–285 (FAFS…DFQV).

The protein belongs to the UbiA prenyltransferase family. Protoheme IX farnesyltransferase subfamily.

Its subcellular location is the cell inner membrane. The catalysed reaction is heme b + (2E,6E)-farnesyl diphosphate + H2O = Fe(II)-heme o + diphosphate. It participates in porphyrin-containing compound metabolism; heme O biosynthesis; heme O from protoheme: step 1/1. Its function is as follows. Converts heme B (protoheme IX) to heme O by substitution of the vinyl group on carbon 2 of heme B porphyrin ring with a hydroxyethyl farnesyl side group. This chain is Protoheme IX farnesyltransferase 2, found in Pseudomonas paraeruginosa (strain DSM 24068 / PA7) (Pseudomonas aeruginosa (strain PA7)).